The following is a 194-amino-acid chain: dCTP deaminase, dUMP-forming (194 aa).

DCTP is bound by residues arginine 104–arginine 109, aspartate 122, threonine 130–glutamate 132, glutamine 151, tyrosine 165, lysine 172, and glutamine 176. The active-site Proton donor/acceptor is the glutamate 132.

This sequence belongs to the dCTP deaminase family. In terms of assembly, homotrimer.

The catalysed reaction is dCTP + 2 H2O = dUMP + NH4(+) + diphosphate. Its pathway is pyrimidine metabolism; dUMP biosynthesis; dUMP from dCTP: step 1/1. Bifunctional enzyme that catalyzes both the deamination of dCTP to dUTP and the hydrolysis of dUTP to dUMP without releasing the toxic dUTP intermediate. The sequence is that of dCTP deaminase, dUMP-forming from Dictyoglomus turgidum (strain DSM 6724 / Z-1310).